The sequence spans 560 residues: Radial spoke head protein 3 homolog (560 aa).

2 disordered regions span residues 134–186 (RKRG…EEPM) and 225–249 (ARKR…PVEG). Over residues 153-162 (RAPSTYTYTS) the composition is skewed to polar residues. Residues 215 to 239 (DSLELQRQREARKRALARKQAQEQL) adopt a coiled-coil conformation. At threonine 286 the chain carries Phosphothreonine; by MAPK1. A coiled-coil region spans residues 331–385 (LEVMEEEELANLRASQREYEELRNSERAEVQRLEEQERRHREEKERRKKQQWEIM). Disordered regions lie at residues 354–375 (NSER…EEKE), 473–498 (HGED…ESLE), and 526–560 (DRRS…EELS).

The protein belongs to the flagellar radial spoke RSP3 family. As to quaternary structure, component of the axonemal radial spoke 1 (RS1) and 2 (RS2) complexes, at least composed of spoke head proteins RSPH1, RSPH3, RSPH9 and the cilia-specific component RSPH4A or sperm-specific component RSPH6A, spoke stalk proteins RSPH14, DNAJB13, DYDC1, ROPN1L and NME5, and the RS1 complex-specific anchor protein IQUB. Interacts with IQUB. Interacts with phosphorylated MAPK1. Interacts with MEK1. Interacts with PKA regulatory subunits PRKAR1A and PRKAR1B. Interacts with RSPH1. Interacts with RSPH4A. Interacts with RSPH6A. Interacts with RSPH9. Interacts with LRRC23.

The protein resides in the cytoplasm. The protein localises to the cytoskeleton. It is found in the cilium axoneme. Its subcellular location is the flagellum axoneme. Functions as part of axonemal radial spoke complexes that play an important part in the motility of sperm and cilia. Functions as a protein kinase A-anchoring protein that scaffolds the cAMP-dependent protein kinase holoenzyme. May serve as a point of convergence for MAPK and PKA signaling in cilia. The polypeptide is Radial spoke head protein 3 homolog (RSPH3) (Homo sapiens (Human)).